Consider the following 159-residue polypeptide: Growth arrest and DNA damage-inducible protein GADD45 gamma (159 aa).

The tract at residues Val43 to Cys86 is homodimerization.

The protein belongs to the GADD45 family. In terms of assembly, undergoes concentration-dependent homodimerization, which is required for growth inhibititory activity and enhances interaction with PCNA. Interacts with GADD45GIP1. Interacts with PCNA.

Involved in the regulation of growth and apoptosis. Mediates activation of stress-responsive MTK1/MEKK4 MAPKKK. This chain is Growth arrest and DNA damage-inducible protein GADD45 gamma (Gadd45g), found in Rattus norvegicus (Rat).